The sequence spans 251 residues: Protein DEEPER ROOTING 1 (251 aa).

An IGT motif motif is present at residues 46–52 (SLLAIGT). Residues 64-105 (VENSSDNVQSVQDTVKFTEEEVDKIRKEFETLLAIKDQAEAQ) are a coiled coil.

The protein belongs to the LAZY family.

Functionally, involved in the control of root growth angle. Involved in cell elongation in the root tip that causes asymmetric root growth and downward bending of the root in response to gravity. The sequence is that of Protein DEEPER ROOTING 1 from Oryza sativa subsp. japonica (Rice).